The following is a 581-amino-acid chain: Jasmonoyl--L-amino acid synthetase GH3.5 (581 aa).

Residue Ser92 coordinates ATP. Residue Ser95 coordinates jasmonate. Residues Thr115, Asn161, and 324–329 each bind ATP; that span reads GASEGW. Residue 159-163 participates in an L-alpha-amino acid binding; sequence TTNLY. Residues 321-324 and Ser326 contribute to the jasmonate site; that span reads ADYG. 534 to 538 serves as a coordination point for an L-alpha-amino acid; it reads EILDH. Position 561 (Lys561) interacts with ATP.

This sequence belongs to the IAA-amido conjugating enzyme family. In terms of tissue distribution, expressed in green shoots, roots and flowers.

The enzyme catalyses a jasmonate + an L-alpha-amino acid + ATP = a jasmonyl-L-amino acid + AMP + diphosphate + H(+). Catalyzes the synthesis of jasmonate-amino acid conjugates by adenylation. Catalyzes the conjugation of jasmonate (JA) to Ile when expressed in a heterologous system (E.coli). Catalyzes in vitro the conjugation of jasmonate (JA) to Ile, Phe, Cys, Leu, Met, Ala, Val and Trp. Involved in the production of JA-Ile in response to infection by the rice blast fungus Magnaporthe oryzae. Required for the accumulation of the flavonoid phytoalexin sakuranetin in response to infection by the rice blast fungus. Involved in herbivory-induced JA-Ile accumulation. Involved in the production of JA-Ile in response to wounding. Required for modulation of light and JA signaling in photomorphogenesis. Required for normal seed development. Required for optimal flower opening and closing and anther dehiscence. May catalyze the synthesis of indole-3-acetic acid (IAA)-amino acid conjugates, providing a mechanism for the plant to cope with the presence of excess auxin. The protein is Jasmonoyl--L-amino acid synthetase GH3.5 of Oryza sativa subsp. japonica (Rice).